The sequence spans 64 residues: Small ribosomal subunit protein eS17 (64 aa).

Belongs to the eukaryotic ribosomal protein eS17 family.

The polypeptide is Small ribosomal subunit protein eS17 (Methanosarcina mazei (strain ATCC BAA-159 / DSM 3647 / Goe1 / Go1 / JCM 11833 / OCM 88) (Methanosarcina frisia)).